The primary structure comprises 569 residues: Potassium-transporting ATPase potassium-binding subunit (569 aa).

10 consecutive transmembrane segments (helical) span residues 3-23 (TEILGVALQILLLLVISYPLG), 64-84 (FLKSLLIINVFWFFWGMILLV), 133-153 (FVIMLFQFITAATGMAAMAGI), 179-199 (ILFPMSLIVGFILIIQGTPMG), 255-275 (IVECWSILIIPMALVFALGFY), 281-301 (LGYVIYGVMLFAYLLGVFCNV), 375-395 (FGGVGVGFMNYYAFLIIAVFI), 421-441 (IVSLAHPFVILIFTAISSYVW), 497-517 (LALIISRYLPIVGQVAIAGLL), and 535-555 (VTFGVMTFFVIVIVAALSFFP).

Belongs to the KdpA family. As to quaternary structure, the system is composed of three essential subunits: KdpA, KdpB and KdpC.

The protein resides in the cell inner membrane. Functionally, part of the high-affinity ATP-driven potassium transport (or Kdp) system, which catalyzes the hydrolysis of ATP coupled with the electrogenic transport of potassium into the cytoplasm. This subunit binds the periplasmic potassium ions and delivers the ions to the membrane domain of KdpB through an intramembrane tunnel. The chain is Potassium-transporting ATPase potassium-binding subunit from Parabacteroides distasonis (strain ATCC 8503 / DSM 20701 / CIP 104284 / JCM 5825 / NCTC 11152).